A 75-amino-acid polypeptide reads, in one-letter code: Small ribosomal subunit protein bS18 (75 aa).

Belongs to the bacterial ribosomal protein bS18 family. As to quaternary structure, part of the 30S ribosomal subunit. Forms a tight heterodimer with protein bS6.

Binds as a heterodimer with protein bS6 to the central domain of the 16S rRNA, where it helps stabilize the platform of the 30S subunit. This is Small ribosomal subunit protein bS18 from Teredinibacter turnerae (strain ATCC 39867 / T7901).